Here is a 287-residue protein sequence, read N- to C-terminus: ATP synthase gamma chain (287 aa).

Belongs to the ATPase gamma chain family. In terms of assembly, F-type ATPases have 2 components, CF(1) - the catalytic core - and CF(0) - the membrane proton channel. CF(1) has five subunits: alpha(3), beta(3), gamma(1), delta(1), epsilon(1). CF(0) has three main subunits: a, b and c. The F(1)F(0) complex interacts with SpoIIIJ and YqjG; YqgA is found in the same complex. Interacts with FloT.

The protein resides in the cell membrane. It localises to the membrane raft. Its function is as follows. Produces ATP from ADP in the presence of a proton gradient across the membrane. The gamma chain is believed to be important in regulating ATPase activity and the flow of protons through the CF(0) complex. This is ATP synthase gamma chain from Bacillus subtilis (strain 168).